The sequence spans 224 residues: Uracil phosphoribosyltransferase (224 aa).

38-42 is a binding site for GTP; that stretch reads KGLVK. 5-phospho-alpha-D-ribose 1-diphosphate-binding positions include Arg87, Arg112, and 140-148; that span reads DPMIATGST. Residues Ile204 and 209 to 211 contribute to the uracil site; that span reads GDA. Asp210 serves as a coordination point for 5-phospho-alpha-D-ribose 1-diphosphate.

This sequence belongs to the UPRTase family. Requires Mg(2+) as cofactor.

It catalyses the reaction UMP + diphosphate = 5-phospho-alpha-D-ribose 1-diphosphate + uracil. Its pathway is pyrimidine metabolism; UMP biosynthesis via salvage pathway; UMP from uracil: step 1/1. With respect to regulation, allosterically activated by GTP. Its function is as follows. Catalyzes the conversion of uracil and 5-phospho-alpha-D-ribose 1-diphosphate (PRPP) to UMP and diphosphate. The protein is Uracil phosphoribosyltransferase of Thermococcus gammatolerans (strain DSM 15229 / JCM 11827 / EJ3).